The sequence spans 83 residues: Beta-toxin Ct7 (83 aa).

An N-terminal signal peptide occupies residues 1–18; that stretch reads MKVLILIIASVLLIGVEC. Residues 19 to 81 enclose the LCN-type CS-alpha/beta domain; it reads KDGYPMNSEG…VWDSATNKCG (63 aa). 4 cysteine pairs are disulfide-bonded: cysteine 29/cysteine 80, cysteine 33/cysteine 54, cysteine 40/cysteine 61, and cysteine 44/cysteine 63. Position 81 is a glycine amide (glycine 81). Residue glycine 82 is a propeptide.

This sequence belongs to the long (4 C-C) scorpion toxin superfamily. Sodium channel inhibitor family. Beta subfamily. Expressed by the venom gland.

The protein localises to the secreted. Its function is as follows. Beta toxins bind voltage-independently at site-4 of sodium channels (Nav) and shift the voltage of activation toward more negative potentials thereby affecting sodium channel activation and promoting spontaneous and repetitive firing. Is possibly toxic to mice, freshwater shrimp and crickets. In Centruroides tecomanus (Scorpion), this protein is Beta-toxin Ct7.